The following is a 569-amino-acid chain: Dolichol kinase EVAN (569 aa).

The Cytoplasmic portion of the chain corresponds to methionine 1–arginine 22. The helical transmembrane segment at isoleucine 23–leucine 43 threads the bilayer. The Lumenal portion of the chain corresponds to serine 44–glycine 67. The helical transmembrane segment at alanine 68–valine 88 threads the bilayer. The Cytoplasmic portion of the chain corresponds to glutamine 89 to threonine 108. A helical membrane pass occupies residues methionine 109–methionine 129. The Lumenal portion of the chain corresponds to serine 130 to arginine 147. A helical transmembrane segment spans residues valine 148–serine 168. Topologically, residues histidine 169–methionine 178 are cytoplasmic. Residues leucine 179–phenylalanine 199 form a helical membrane-spanning segment. At proline 200–glutamate 207 the chain is on the lumenal side. Residues alanine 208–alanine 228 form a helical membrane-spanning segment. At lysine 229 to glycine 252 the chain is on the cytoplasmic side. Residues isoleucine 253–leucine 273 traverse the membrane as a helical segment. Residues histidine 274 to serine 296 lie on the Lumenal side of the membrane. Asparagine 289 carries an N-linked (GlcNAc...) asparagine glycan. A helical transmembrane segment spans residues valine 297–phenylalanine 317. Over valine 318–arginine 340 the chain is Cytoplasmic. A helical membrane pass occupies residues leucine 341–isoleucine 361. At serine 362–arginine 369 the chain is on the lumenal side. A helical transmembrane segment spans residues isoleucine 370–leucine 390. At glutamine 391 to lysine 393 the chain is on the cytoplasmic side. A helical membrane pass occupies residues phenylalanine 394 to isoleucine 414. At tryptophan 415–leucine 440 the chain is on the lumenal side. A helical transmembrane segment spans residues isoleucine 441–phenylalanine 461. At asparagine 462–arginine 464 the chain is on the cytoplasmic side. Residues alanine 465–valine 485 form a helical membrane-spanning segment. Topologically, residues glycine 486–glycine 508 are lumenal. The tract at residues histidine 487–glutamate 503 is CTP-binding. Residues isoleucine 509 to isoleucine 529 form a helical membrane-spanning segment. The Cytoplasmic segment spans residues leucine 530–glutamate 548. A helical membrane pass occupies residues alanine 549–leucine 569.

Belongs to the polyprenol kinase family.

Its subcellular location is the endoplasmic reticulum membrane. It carries out the reaction a di-trans,poly-cis-dolichol + CTP = a di-trans,poly-cis-dolichyl phosphate + CDP + H(+). Its function is as follows. Essential for pollen development. Involved in protein N-glycosylation in the endoplasmic reticulum (ER), especially in the female gametophyte. Mediates pollen tube (PT) reception in synergids through protein glycosylation. The sequence is that of Dolichol kinase EVAN from Arabidopsis thaliana (Mouse-ear cress).